Reading from the N-terminus, the 485-residue chain is Rhamnulokinase (485 aa).

ATP is bound at residue 8–12; that stretch reads ASSGR. Substrate is bound by residues glycine 78 and 231–233; that span reads HDT. The Proton acceptor role is filled by aspartate 232. Threonine 254 contributes to the ATP binding site. Residue asparagine 291 coordinates substrate. Residue glutamine 299 coordinates ATP. Cysteine 348 and cysteine 365 are disulfide-bonded. ATP is bound at residue glycine 397. Cysteine 408 and cysteine 412 are oxidised to a cystine.

The protein belongs to the rhamnulokinase family. The cofactor is Mg(2+).

The catalysed reaction is L-rhamnulose + ATP = L-rhamnulose 1-phosphate + ADP + H(+). Its pathway is carbohydrate degradation; L-rhamnose degradation; glycerone phosphate from L-rhamnose: step 2/3. Involved in the catabolism of L-rhamnose (6-deoxy-L-mannose). Catalyzes the transfer of the gamma-phosphate group from ATP to the 1-hydroxyl group of L-rhamnulose to yield L-rhamnulose 1-phosphate. The chain is Rhamnulokinase from Yersinia pestis bv. Antiqua (strain Angola).